We begin with the raw amino-acid sequence, 211 residues long: MYQPDFPTVPFRLGLYPVVDSVAWIERLLEAGVRTIQLRIKDKRDEEVEADVIAAIALGRRYNARLFINDYWRLAIKHRAYGVHLGQEDLETTDLKAIQAAGLRLGVSTHNDMEIDVALAAKPSYIALGHVFPTQTKQMPSAPQGLAQLASHIERLADYPTVAIGGISLERAPAVLATGVGSIAVVSAITQAADWREATAELLAIAGVGDE.

Residues 37–41 (QLRIK) and asparagine 69 each bind 4-amino-2-methyl-5-(diphosphooxymethyl)pyrimidine. Residues aspartate 70 and aspartate 89 each contribute to the Mg(2+) site. 4-amino-2-methyl-5-(diphosphooxymethyl)pyrimidine is bound at residue serine 108. Residue 134–136 (TQT) participates in 2-[(2R,5Z)-2-carboxy-4-methylthiazol-5(2H)-ylidene]ethyl phosphate binding. Lysine 137 provides a ligand contact to 4-amino-2-methyl-5-(diphosphooxymethyl)pyrimidine. 2-[(2R,5Z)-2-carboxy-4-methylthiazol-5(2H)-ylidene]ethyl phosphate is bound by residues glycine 166 and 186–187 (VS).

It belongs to the thiamine-phosphate synthase family. The cofactor is Mg(2+).

The catalysed reaction is 2-[(2R,5Z)-2-carboxy-4-methylthiazol-5(2H)-ylidene]ethyl phosphate + 4-amino-2-methyl-5-(diphosphooxymethyl)pyrimidine + 2 H(+) = thiamine phosphate + CO2 + diphosphate. It carries out the reaction 2-(2-carboxy-4-methylthiazol-5-yl)ethyl phosphate + 4-amino-2-methyl-5-(diphosphooxymethyl)pyrimidine + 2 H(+) = thiamine phosphate + CO2 + diphosphate. It catalyses the reaction 4-methyl-5-(2-phosphooxyethyl)-thiazole + 4-amino-2-methyl-5-(diphosphooxymethyl)pyrimidine + H(+) = thiamine phosphate + diphosphate. It participates in cofactor biosynthesis; thiamine diphosphate biosynthesis; thiamine phosphate from 4-amino-2-methyl-5-diphosphomethylpyrimidine and 4-methyl-5-(2-phosphoethyl)-thiazole: step 1/1. Condenses 4-methyl-5-(beta-hydroxyethyl)thiazole monophosphate (THZ-P) and 2-methyl-4-amino-5-hydroxymethyl pyrimidine pyrophosphate (HMP-PP) to form thiamine monophosphate (TMP). The chain is Thiamine-phosphate synthase from Salmonella paratyphi B (strain ATCC BAA-1250 / SPB7).